The sequence spans 312 residues: Olfactory receptor 1D2 (312 aa).

At 1 to 25 the chain is on the extracellular side; that stretch reads MDGGNQSEGSEFLLLGMSESPEQQR. Asn5 is a glycosylation site (N-linked (GlcNAc...) asparagine). The helical transmembrane segment at 26-49 threads the bilayer; sequence ILFWMFLSMYLVTVVGNVLIILAI. The Cytoplasmic portion of the chain corresponds to 50 to 57; that stretch reads SSDSCLHT. Residues 58–79 traverse the membrane as a helical segment; that stretch reads PMYFFLANLSFTDLFFVTNTIP. The Extracellular segment spans residues 80–100; the sequence is KMLVNLQSQNKAISYAGCLTQ. A disulfide bond links Cys97 and Cys189. The helical transmembrane segment at 101–120 threads the bilayer; that stretch reads LYFLVSLVALDNLILAVMAY. The Cytoplasmic segment spans residues 121–139; that stretch reads DRYVAICCPLHYTTAMSPK. The helical transmembrane segment at 140 to 158 threads the bilayer; it reads LCILLLSLCWVLSVLYGLI. The Extracellular segment spans residues 159-196; it reads HTLLMTRVTFCGSRKIHYIFCEMYVLLRMACSNIQTNH. An N-linked (GlcNAc...) asparagine glycan is attached at Asn195. A helical membrane pass occupies residues 197-219; sequence TVLIATGCFIFLIPFGFVIISYV. Over 220–236 the chain is Cytoplasmic; that stretch reads LIIRAILRIPSLSKKYK. A helical membrane pass occupies residues 237 to 259; that stretch reads AFSTCASHLGAVSLFYGTLCMVY. Residues 260–271 lie on the Extracellular side of the membrane; sequence LKPLHTYSVKDS. The chain crosses the membrane as a helical span at residues 272–291; that stretch reads VATVMYAVVTPMMNPFIYSL. Topologically, residues 292 to 312 are cytoplasmic; it reads RNKDMHGALGRLLDKHFKRLT.

The protein belongs to the G-protein coupled receptor 1 family.

It is found in the cell membrane. Odorant receptor. The sequence is that of Olfactory receptor 1D2 (OR1D2) from Pan troglodytes (Chimpanzee).